The chain runs to 50 residues: Apoptotic protease-activating factor 1 (50 aa).

One can recognise a CARD domain in the interval 1–31 (ILKKDNYSYISFYNALIHEGYKDLAALLHSG). In terms of domain architecture, NB-ARC spans 46–50 (GGITS).

In terms of assembly, monomer. Oligomerizes to a heptameric ring, known as the apoptosome, upon binding of cytochrome c and dATP. Oligomeric Apaf-1 and pro-caspase-9 bind to each other via their respective NH2-terminal CARD domains and consecutively mature caspase-9 is released from the complex. Interacts with APIP. Interacts (via CARD and NACHT domains) with NAIP/BIRC1 (via NACHT domain). Interacts with CIAO2A.

Oligomeric Apaf-1 mediates the cytochrome c-dependent autocatalytic activation of pro-caspase 9 (Apaf-3), leading to the activation of caspase-3 and apoptosis. This activation requires ATP. This chain is Apoptotic protease-activating factor 1 (APAF1), found in Canis lupus familiaris (Dog).